Consider the following 385-residue polypeptide: Calcium/calmodulin-dependent protein kinase type 1D (385 aa).

The Protein kinase domain occupies 23–279; it reads FEFKETLGTG…CEQAARHPWI (257 aa). ATP-binding positions include 29–37 and K52; that span reads LGTGAFSEV. K113 is covalently cross-linked (Glycyl lysine isopeptide (Lys-Gly) (interchain with G-Cter in SUMO2)). Phosphoserine is present on S122. The active-site Proton acceptor is the D144. The residue at position 180 (T180) is a Phosphothreonine; by CaMKK1 and CaMKK2. Residues 279–319 are autoinhibitory domain; the sequence is IAGDTALSKNIHESVSAQIRKNFAKSKWRQAFNATAVVRHM. Positions 299–320 are calmodulin-binding; the sequence is KNFAKSKWRQAFNATAVVRHMR. The Nuclear export signal signature appears at 318 to 324; it reads HMRRLQL. The interval 363–385 is disordered; sequence VAGVGAERRPRPTTVTTGHTGSK. The span at 375–385 shows a compositional bias: polar residues; sequence TTVTTGHTGSK.

This sequence belongs to the protein kinase superfamily. CAMK Ser/Thr protein kinase family. CaMK subfamily. Expressed ubiquitously with high levels in brain and low levels in kidney. Isoform 2 is highly expressed in brain compared to other tissues. In hematopoietic cell lines predominant expression was detected in T and EC cells.

It is found in the cytoplasm. It localises to the nucleus. It carries out the reaction L-seryl-[protein] + ATP = O-phospho-L-seryl-[protein] + ADP + H(+). It catalyses the reaction L-threonyl-[protein] + ATP = O-phospho-L-threonyl-[protein] + ADP + H(+). Activated by Ca(2+)/calmodulin. Binding of calmodulin results in conformational change that relieves intrasteric autoinhibition and allows phosphorylation of Thr-180 within the activation loop by CaMKK1 or CaMKK2. Phosphorylation of Thr-180 results in several fold increase in total activity. Unlike CaMK4, may be unable to exhibit autonomous activity after Ca(2+)/calmodulin activation. Its function is as follows. Calcium/calmodulin-dependent protein kinase that operates in the calcium-triggered CaMKK-CaMK1 signaling cascade and, upon calcium influx, activates CREB-dependent gene transcription, regulates calcium-mediated granulocyte function and respiratory burst and promotes basal dendritic growth of hippocampal neurons. In neutrophil cells, required for cytokine-induced proliferative responses and activation of the respiratory burst. Activates the transcription factor CREB1 in hippocampal neuron nuclei. May play a role in apoptosis of erythroleukemia cells. In vitro, phosphorylates transcription factor CREM isoform Beta. Isoform 1 but not isoform 2 activates CREB1. The sequence is that of Calcium/calmodulin-dependent protein kinase type 1D (Camk1d) from Mus musculus (Mouse).